The chain runs to 536 residues: Membrane protein insertase YidC (536 aa).

The next 5 helical transmembrane spans lie at 7–27 (LLVM…QQDF), 332–352 (FWLL…IMGV), 411–431 (MGGC…YWTF), 449–469 (LSAQ…MFLL), and 488–508 (FMPV…VLYW).

This sequence belongs to the OXA1/ALB3/YidC family. Type 1 subfamily. Interacts with the Sec translocase complex via SecD. Specifically interacts with transmembrane segments of nascent integral membrane proteins during membrane integration.

It is found in the cell inner membrane. Its function is as follows. Required for the insertion and/or proper folding and/or complex formation of integral membrane proteins into the membrane. Involved in integration of membrane proteins that insert both dependently and independently of the Sec translocase complex, as well as at least some lipoproteins. Aids folding of multispanning membrane proteins. This Haemophilus ducreyi (strain 35000HP / ATCC 700724) protein is Membrane protein insertase YidC.